The sequence spans 191 residues: Insulin-like peptide INSL6 (191 aa).

The N-terminal stretch at M1–E22 is a signal peptide. Disulfide bonds link C33–C172, C45–C185, and C171–C176. Positions F53 to Q161 are cleaved as a propeptide — connecting peptide.

This sequence belongs to the insulin family.

Its subcellular location is the secreted. Its function is as follows. May have a role in sperm development and fertilization. The sequence is that of Insulin-like peptide INSL6 (Insl6) from Mus musculus (Mouse).